Reading from the N-terminus, the 135-residue chain is MAGSARSAMAAKALQTILNIGLLALATILVIFLVKETFHLAKVLLISSEKDSSYQLIEGIVIYFLYFEFIALIVKYFQSGYHFPLRYFIYIGITAIIRLIIVDHKSPSDTLVYSAAILLLVVTLYLANSNRLKRE.

4 helical membrane passes run 14 to 34 (LQTILNIGLLALATILVIFLV), 54 to 74 (YQLIEGIVIYFLYFEFIALIV), 82 to 102 (HFPLRYFIYIGITAIIRLIIV), and 107 to 127 (PSDTLVYSAAILLLVVTLYLA).

It belongs to the PsiE family.

The protein localises to the cell inner membrane. The chain is Protein PsiE homolog from Pectobacterium atrosepticum (strain SCRI 1043 / ATCC BAA-672) (Erwinia carotovora subsp. atroseptica).